The following is a 418-amino-acid chain: MTRAILLVLDSFGIGNAPDAAAFGDAGADTLGHIAHHRAASGRPLALPHLASLGLYHAHHLATGEWAEGITPPETLDGAYAAAAEISSGKDTPSGHWEIAGVPALFEWGYFPDKTQSFPPDLLEALIEQAKLPGVLGNCHASGMPILETLGEAHIASGKPIVYTSADSVFQIAAHETHFGLDRLYALCEIARELLMPYNIGRVIARPFVGETPETFERTGNRRDYAIEPPTPTVLQKLHDDGGKVLGVGKIGDIYAHCGVSNVIKAHGHDALFDATLEALDEAGDRTLVMTNFVDFDTLYGHRRDPDGYAEALEAFDRRLPEVLAKLRPDDLLILTADHGNDPTWTGTDHTREQVPVLASGAGLAPRPLGHDDGHLVTFADIGQSLATHFGLSPMAHGSDFLDVAPTGPSSHASTTGD.

Asp10, Asp297, His302, Asp338, His339, and His350 together coordinate Mn(2+).

It belongs to the phosphopentomutase family. The cofactor is Mn(2+).

It is found in the cytoplasm. The enzyme catalyses 2-deoxy-alpha-D-ribose 1-phosphate = 2-deoxy-D-ribose 5-phosphate. It catalyses the reaction alpha-D-ribose 1-phosphate = D-ribose 5-phosphate. The protein operates within carbohydrate degradation; 2-deoxy-D-ribose 1-phosphate degradation; D-glyceraldehyde 3-phosphate and acetaldehyde from 2-deoxy-alpha-D-ribose 1-phosphate: step 1/2. Functionally, isomerase that catalyzes the conversion of deoxy-ribose 1-phosphate (dRib-1-P) and ribose 1-phosphate (Rib-1-P) to deoxy-ribose 5-phosphate (dRib-5-P) and ribose 5-phosphate (Rib-5-P), respectively. This chain is Phosphopentomutase, found in Chromohalobacter salexigens (strain ATCC BAA-138 / DSM 3043 / CIP 106854 / NCIMB 13768 / 1H11).